Reading from the N-terminus, the 1457-residue chain is Bridge-like lipid transfer protein family member 3B (1457 aa).

In terms of domain architecture, Chorein N-terminal spans 3 to 94 (GIIKKQILKH…DKVIMEMSTC (92 aa)). Disordered regions lie at residues 267 to 295 (STEQRKSMAPEPTQSSTVTSSAQHVKTPQ) and 409 to 449 (DRNL…PQPS). Over residues 278–295 (PTQSSTVTSSAQHVKTPQ) the composition is skewed to polar residues. A phosphoserine mark is found at serine 414, serine 418, serine 774, and serine 934. Disordered regions lie at residues 975–1038 (SEDE…TGKG), 1056–1099 (ASLS…LSVS), and 1145–1183 (SNTSCQSPAESVNTSANTQTCGEASPEAVSTNSEGTQEN). A compositionally biased stretch (polar residues) spans 980-995 (SGLSHKSGSGEMTSEG). Serine 1008 is modified (phosphoserine). Polar residues predominate over residues 1145-1180 (SNTSCQSPAESVNTSANTQTCGEASPEAVSTNSEGT). A coiled-coil region spans residues 1410 to 1455 (ANFLDITREQLMEENECLRQRLAQAKMELAEAHSARDELLHQMKRM).

Homodimer (via N-terminus). Associates with the Golgi-associated retrograde protein (GARP) complex. Interacts with GARP complex component VPS52. Interacts (via C-terminal coiled-coil domain) with STX6.

It localises to the cytoplasm. The protein resides in the cytosol. It is found in the early endosome. Its function is as follows. Tube-forming lipid transport protein which mediates the transfer of lipids between membranes at organelle contact sites. Required for retrograde traffic of vesicle clusters in the early endocytic pathway to the Golgi complex. This chain is Bridge-like lipid transfer protein family member 3B (Bltp3b), found in Mus musculus (Mouse).